The sequence spans 331 residues: Probable leucine carboxyl methyltransferase 1 (331 aa).

Residues R82, G107, D131, 179–180 (DL), and E206 contribute to the S-adenosyl-L-methionine site.

The protein belongs to the methyltransferase superfamily. LCMT family.

It catalyses the reaction [phosphatase 2A protein]-C-terminal L-leucine + S-adenosyl-L-methionine = [phosphatase 2A protein]-C-terminal L-leucine methyl ester + S-adenosyl-L-homocysteine. Functionally, methylates the carboxyl group of the C-terminal leucine residue of protein phosphatase 2A catalytic subunits to form alpha-leucine ester residues. The chain is Probable leucine carboxyl methyltransferase 1 from Caenorhabditis briggsae.